The primary structure comprises 391 residues: 23S rRNA (uracil(747)-C(5))-methyltransferase RlmC (391 aa).

[4Fe-4S] cluster-binding residues include Cys5, Cys13, Cys16, and Cys95. S-adenosyl-L-methionine is bound by residues Gln220, Phe249, Glu276, and Asn322. Cys349 functions as the Nucleophile in the catalytic mechanism.

The protein belongs to the class I-like SAM-binding methyltransferase superfamily. RNA M5U methyltransferase family. RlmC subfamily.

It catalyses the reaction uridine(747) in 23S rRNA + S-adenosyl-L-methionine = 5-methyluridine(747) in 23S rRNA + S-adenosyl-L-homocysteine + H(+). Its function is as follows. Catalyzes the formation of 5-methyl-uridine at position 747 (m5U747) in 23S rRNA. The sequence is that of 23S rRNA (uracil(747)-C(5))-methyltransferase RlmC from Actinobacillus pleuropneumoniae serotype 5b (strain L20).